Reading from the N-terminus, the 142-residue chain is Large ribosomal subunit protein bL17 (142 aa).

This sequence belongs to the bacterial ribosomal protein bL17 family. As to quaternary structure, part of the 50S ribosomal subunit. Contacts protein L32.

This Wolbachia pipientis subsp. Culex pipiens (strain wPip) protein is Large ribosomal subunit protein bL17.